A 242-amino-acid chain; its full sequence is Tryptophan synthase alpha chain (242 aa).

Catalysis depends on proton acceptor residues E31 and D42.

This sequence belongs to the TrpA family. In terms of assembly, tetramer of two alpha and two beta chains.

It catalyses the reaction (1S,2R)-1-C-(indol-3-yl)glycerol 3-phosphate + L-serine = D-glyceraldehyde 3-phosphate + L-tryptophan + H2O. The protein operates within amino-acid biosynthesis; L-tryptophan biosynthesis; L-tryptophan from chorismate: step 5/5. Functionally, the alpha subunit is responsible for the aldol cleavage of indoleglycerol phosphate to indole and glyceraldehyde 3-phosphate. The polypeptide is Tryptophan synthase alpha chain (Staphylococcus aureus (strain MRSA252)).